A 466-amino-acid chain; its full sequence is Cysteine--tRNA ligase (466 aa).

C28 lines the Zn(2+) pocket. The 'HIGH' region signature appears at 30 to 40 (PTVYNFFHIGN). Positions 208, 233, and 237 each coordinate Zn(2+). Positions 265-269 (KMSKS) match the 'KMSKS' region motif. Position 268 (K268) interacts with ATP.

Belongs to the class-I aminoacyl-tRNA synthetase family. As to quaternary structure, monomer. Requires Zn(2+) as cofactor.

Its subcellular location is the cytoplasm. It carries out the reaction tRNA(Cys) + L-cysteine + ATP = L-cysteinyl-tRNA(Cys) + AMP + diphosphate. This chain is Cysteine--tRNA ligase, found in Clostridium perfringens (strain ATCC 13124 / DSM 756 / JCM 1290 / NCIMB 6125 / NCTC 8237 / Type A).